Here is a 382-residue protein sequence, read N- to C-terminus: Probable purine permease 4 (382 aa).

Transmembrane regions (helical) follow at residues 25–45, 62–82, 98–118, 121–141, 150–170, 185–205, 224–244, 260–280, 291–311, and 315–335; these read LTLLIVTYFFLFFGSIASSLL, WVQSAGFPLLLILIYFPHYVL, LIFSVLIGLVLGFNNFLFSWG, YLPVSTSSLLLSTQLVFTLIL, ITFSNLNCVVLLTLSSVLLAL, YFIGYVSTIGAGLLFALYLPV, LVMEFAATVFATIGMACEGGF, TFYWTFAILANVVTWQLSFAA, ITGGICMTALLAMNVIGGVVA, and VFGGVKIVSTVLCIWGFSSYT. In terms of domain architecture, EamA spans 66-170; the sequence is AGFPLLLILI…LTLSSVLLAL (105 aa). The segment at 345–364 is disordered; the sequence is EEKEKGEYSGVKTTEDSGEM.

This sequence belongs to the purine permeases (TC 2.A.7.14) family.

It is found in the membrane. The chain is Probable purine permease 4 (PUP4) from Arabidopsis thaliana (Mouse-ear cress).